The sequence spans 555 residues: MEIYSPVVPAVKDVKRLDEIRKSAKFHPSIWGDFFLSYNSDNTQISEAEEEEVAKQKEAVRELLAQVPEGSTYKMELIDLIQRLGVNYHFEKEIHDSLNYIHENSQHNDDEVRTTALRFRLLRQQGYRVPCDVFRKFTDGEGNFATALTNDVEGLLELYEASHLATRGEEILDRAMEFSSSHLQALLNQHLVGSVSLSKRVDEALKMPIRKTLTRLGARKFISLYQEDESRNELLLNFAKLDFNMVQKMHQRELSDATRWWKKLEVAKRMPYARDRVVECFFWIVGVYFEPCYATARRILSKAINMASIVDDTYEYATLDELQILTDAIQRWDVNETLEDSPPHVQMCYKALIQAYAEIEDEVVENFGGEELYRVQYAIEHVKQSAVAFFEEAKWIYNNSIPTVEEYMKVAFVTCGYMMLSTTSLVGVGSDRVSKADFDWIVNEPLIVRASCVICRLMDDLVGDEYEEKPSSVLCYMKQYVVSKDEARARLEQQVKDAWKDMNEECIEPRPASMQILTRVLNLGRVIHLLYREGDSYTDPNRSKEWVKMVFVDPI.

Mg(2+)-binding residues include D311 and E315. A DDXXD motif motif is present at residues 311–315 (DDTYE). 2 homodimerization regions span residues 316–322 (YATLDEL) and 392–429 (EAKWIYNNSIPTVEEYMKVAFVTCGYMMLSTTSLVGVG). Mg(2+) contacts are provided by D459 and E467.

It belongs to the terpene synthase family. In terms of assembly, homodimer. Requires Mn(2+) as cofactor. It depends on Mg(2+) as a cofactor. As to expression, expressed in peltate glandular trichomes. Present at low levels in flowers, leaves and stems.

It carries out the reaction (2E,6E)-farnesyl diphosphate = bicyclogermacrene + diphosphate. The enzyme catalyses (2E)-geranyl diphosphate = terpinolene + diphosphate. The catalysed reaction is (2E)-geranyl diphosphate = (4R)-limonene + diphosphate. It catalyses the reaction (2E)-geranyl diphosphate + H2O = (2E)-geraniol + diphosphate. It carries out the reaction (2E,6E)-farnesyl diphosphate = allo-aromadendrene + diphosphate. It participates in secondary metabolite biosynthesis; terpenoid biosynthesis. Its function is as follows. Involved in the biosynthesis of phenolic sesquiterpenes natural products. Sesquiterpene synthase converting (2E,6E)-farnesyl diphosphate (FPP) to alloaromadendrene and bicyclo-germacrene. The product formation is dependent on the metal ions present and in presence of manganese, bicyclo-germacrene is greatly favored while both alloaromadendrene and bicyclo-germacrene are produced in equivalent amounts in the presence of magnesium. Can also convert geranyl diphosphate (GPP) to terpinolene, limonene and geraniol, and this conversion is not affected by the presence of magnesium or manganese. The sequence is that of Bicyclo-germacrene synthase (TPS4) from Origanum vulgare (Wild marjoram).